A 154-amino-acid chain; its full sequence is MKCPFCGHAATQVIDTRMSEEGDTVRRRRRCESCDRRFTTYERIELFFPAVVKKNGSRVDYDRNKVKDSMRLALRKRPVSAEAIDEAIARIEEKLLSHGEKEIGSDRVGELVMRELKRLDKIGYIRFASVYRSFEDLAEFRDVLDEVAATNVRK.

A zinc finger spans residues 3 to 34 (CPFCGHAATQVIDTRMSEEGDTVRRRRRCESC). The region spanning 49–139 (PAVVKKNGSR…VYRSFEDLAE (91 aa)) is the ATP-cone domain.

This sequence belongs to the NrdR family. It depends on Zn(2+) as a cofactor.

Functionally, negatively regulates transcription of bacterial ribonucleotide reductase nrd genes and operons by binding to NrdR-boxes. The sequence is that of Transcriptional repressor NrdR from Ralstonia pickettii (strain 12J).